Consider the following 396-residue polypeptide: Adenylyltransferase and sulfurtransferase UBA4 (396 aa).

Residues G51, D72, 79–83, K95, and 139–140 contribute to the ATP site; these read SNLHR and DG. C180 and C183 together coordinate Zn(2+). The active-site Glycyl thioester intermediate; for adenylyltransferase activity is the C197. Zn(2+)-binding residues include C257 and C260. In terms of domain architecture, Rhodanese spans 305–394; the sequence is VSTKHILLDV…WAKNVDEKFP (90 aa). The active-site Cysteine persulfide intermediate; for sulfurtransferase activity is C355.

The protein in the N-terminal section; belongs to the HesA/MoeB/ThiF family. UBA4 subfamily. It depends on Zn(2+) as a cofactor.

The protein resides in the cytoplasm. It is found in the cytosol. The protein operates within tRNA modification; 5-methoxycarbonylmethyl-2-thiouridine-tRNA biosynthesis. Functionally, plays a central role in 2-thiolation of mcm(5)S(2)U at tRNA wobble positions of cytosolic tRNA(Lys), tRNA(Glu) and tRNA(Gln). Acts by mediating the C-terminal thiocarboxylation of sulfur carrier URM1. Its N-terminus first activates URM1 as acyl-adenylate (-COAMP), then the persulfide sulfur on the catalytic cysteine is transferred to URM1 to form thiocarboxylation (-COSH) of its C-terminus. The reaction probably involves hydrogen sulfide that is generated from the persulfide intermediate and that acts as a nucleophile towards URM1. Subsequently, a transient disulfide bond is formed. Does not use thiosulfate as sulfur donor; NFS1 probably acting as a sulfur donor for thiocarboxylation reactions. Prior mcm(5) tRNA modification by the elongator complex is required for 2-thiolation. May also be involved in protein urmylation. The protein is Adenylyltransferase and sulfurtransferase UBA4 of Yarrowia lipolytica (strain CLIB 122 / E 150) (Yeast).